A 134-amino-acid chain; its full sequence is Profilin-4 (134 aa).

A disulfide bridge links C13 with C118. The short motif at 84–100 (AVIRGKKGSGGITIKKT) is the Involved in PIP2 interaction element. Residue T114 is modified to Phosphothreonine.

The protein belongs to the profilin family. As to quaternary structure, occurs in many kinds of cells as a complex with monomeric actin in a 1:1 ratio. Phosphorylated by MAP kinases.

Its subcellular location is the cytoplasm. It localises to the cytoskeleton. Binds to actin and affects the structure of the cytoskeleton. At high concentrations, profilin prevents the polymerization of actin, whereas it enhances it at low concentrations. The polypeptide is Profilin-4 (Olea europaea (Common olive)).